The primary structure comprises 480 residues: 3-isopropylmalate dehydratase large subunit (480 aa).

Cys-357, Cys-417, and Cys-420 together coordinate [4Fe-4S] cluster. Residues 431 to 441 (GQRCASTSNRN) show a composition bias toward polar residues. Residues 431–454 (GQRCASTSNRNFEGRQGKGGRTHL) are disordered.

This sequence belongs to the aconitase/IPM isomerase family. LeuC type 1 subfamily. As to quaternary structure, heterodimer of LeuC and LeuD. Requires [4Fe-4S] cluster as cofactor.

It catalyses the reaction (2R,3S)-3-isopropylmalate = (2S)-2-isopropylmalate. It participates in amino-acid biosynthesis; L-leucine biosynthesis; L-leucine from 3-methyl-2-oxobutanoate: step 2/4. Its function is as follows. Catalyzes the isomerization between 2-isopropylmalate and 3-isopropylmalate, via the formation of 2-isopropylmaleate. The chain is 3-isopropylmalate dehydratase large subunit from Mycobacteroides abscessus (strain ATCC 19977 / DSM 44196 / CCUG 20993 / CIP 104536 / JCM 13569 / NCTC 13031 / TMC 1543 / L948) (Mycobacterium abscessus).